The primary structure comprises 489 residues: Bridging integrator 2 (489 aa).

Residues 28 to 244 (VLQKLGKTVE…MSKLEKQHSN (217 aa)) enclose the BAR domain. Over residues 267 to 302 (QSCAASSPVSPVSPVSPVTSPTSPSATSEPESVSAT) the composition is skewed to low complexity. A disordered region spans residues 267-489 (QSCAASSPVS…ASGGLVGLFL (223 aa)). At Ser273 the chain carries Phosphoserine. The span at 311-331 (GGEDSCESQESLKDEEADEAQ) shows a compositional bias: acidic residues. Ser357 is modified (phosphoserine). The segment covering 358 to 368 (QEEALSSSAQS) has biased composition (low complexity). Ser380, Ser392, Ser420, Ser422, Ser424, Ser430, Ser435, Ser439, and Ser443 each carry phosphoserine.

Homodimer. Interacts with BIN1. Interacts with ARHGEF6 (via SH3 domain), ARHGEF7 (via SH3 domain), SH3GL1, SH3GL2 and SH3GL3. Identified in a complex with ARHGEF6 and GIT2.

Its subcellular location is the cytoplasm. The protein localises to the cell projection. The protein resides in the podosome membrane. It localises to the cell cortex. It is found in the phagocytic cup. In terms of biological role, promotes cell motility and migration, probably via its interaction with the cell membrane and with podosome proteins that mediate interaction with the cytoskeleton. Modulates membrane curvature and mediates membrane tubulation. Inhibits phagocytosis. Plays a role in podosome formation. The polypeptide is Bridging integrator 2 (Bin2) (Mus musculus (Mouse)).